We begin with the raw amino-acid sequence, 250 residues long: Flavin-dependent thymidylate synthase (250 aa).

The ThyX domain maps to 7 to 233 (LRVQLIAKTE…PQVFSDFEIT (227 aa)). Residues S71, 95 to 97 (RHR), and Q103 each bind FAD. Residues 92 to 95 (ELIR), 103 to 107 (QLSQR), and R172 each bind dUMP. The ThyX motif motif lies at 95-105 (RHRHFSYSQLS). Residues 188-190 (NYR) and H194 contribute to the FAD site. R199 contacts dUMP. R199 acts as the Involved in ionization of N3 of dUMP, leading to its activation in catalysis.

The protein belongs to the thymidylate synthase ThyX family. As to quaternary structure, homotetramer. Requires FAD as cofactor.

It carries out the reaction dUMP + (6R)-5,10-methylene-5,6,7,8-tetrahydrofolate + NADPH + H(+) = dTMP + (6S)-5,6,7,8-tetrahydrofolate + NADP(+). It functions in the pathway pyrimidine metabolism; dTTP biosynthesis. Catalyzes the reductive methylation of 2'-deoxyuridine-5'-monophosphate (dUMP) to 2'-deoxythymidine-5'-monophosphate (dTMP) while utilizing 5,10-methylenetetrahydrofolate (mTHF) as the methyl donor, and NADPH and FADH(2) as the reductant. In Mycolicibacterium gilvum (strain PYR-GCK) (Mycobacterium gilvum (strain PYR-GCK)), this protein is Flavin-dependent thymidylate synthase.